The sequence spans 243 residues: Probable transcriptional regulatory protein BAV2207 (243 aa).

A disordered region spans residues methionine 1–arginine 21.

It belongs to the TACO1 family.

Its subcellular location is the cytoplasm. This chain is Probable transcriptional regulatory protein BAV2207, found in Bordetella avium (strain 197N).